A 712-amino-acid chain; its full sequence is Polyribonucleotide nucleotidyltransferase (712 aa).

Mg(2+) is bound by residues aspartate 487 and aspartate 493. In terms of domain architecture, KH spans 554–613 (PKILTMQINPEKIREVIGPSGKQINKIIDETGVKIDIEQDGTIFISSVNEAMNQKAKQII). The S1 motif domain maps to 623 to 691 (GQIYLGKVKR…KQGRVNLSRK (69 aa)).

Belongs to the polyribonucleotide nucleotidyltransferase family. Mg(2+) serves as cofactor.

It localises to the cytoplasm. The enzyme catalyses RNA(n+1) + phosphate = RNA(n) + a ribonucleoside 5'-diphosphate. Involved in mRNA degradation. Catalyzes the phosphorolysis of single-stranded polyribonucleotides processively in the 3'- to 5'-direction. This is Polyribonucleotide nucleotidyltransferase from Geobacillus sp. (strain WCH70).